A 1099-amino-acid chain; its full sequence is Protein DDB_G0287365 (1099 aa).

The first 24 residues, 1–24, serve as a signal peptide directing secretion; the sequence is MMSFNLILILIIFLILIQNYVIDG. A G8 domain is found at 47–174; it reads KSWKKLKLPI…TKTTWTKLIS (128 aa). N-linked (GlcNAc...) asparagine glycosylation is found at N62, N137, N664, N764, and N858.

Belongs to the CEMIP family.

In Dictyostelium discoideum (Social amoeba), this protein is Protein DDB_G0287365.